Reading from the N-terminus, the 629-residue chain is tRNA uridine 5-carboxymethylaminomethyl modification enzyme MnmG (629 aa).

FAD contacts are provided by residues 13-18 (GGGHAG), V125, and S180. Position 273–287 (273–287 (GPRYCPSIEDKVMRF)) interacts with NAD(+). Q370 contacts FAD.

This sequence belongs to the MnmG family. Homodimer. Heterotetramer of two MnmE and two MnmG subunits. The cofactor is FAD.

The protein resides in the cytoplasm. In terms of biological role, NAD-binding protein involved in the addition of a carboxymethylaminomethyl (cmnm) group at the wobble position (U34) of certain tRNAs, forming tRNA-cmnm(5)s(2)U34. The polypeptide is tRNA uridine 5-carboxymethylaminomethyl modification enzyme MnmG (Salmonella agona (strain SL483)).